A 428-amino-acid polypeptide reads, in one-letter code: MKIINSKQKALQELRRISQRTTSGDNKKINSIVENILQEVKFHGDIAVEKYTKKFDGFYPKPMQVSTRDLKTAWEETDQHLKKSLEVAYQRIKKFHEKEIPESFTIKGEFGDSVQRRWMPVKNAGLYIPGGRAAYPSTVLMNAIPAKVAGVKEISMVSPGNEKGKINTTVLAAAYLSGVDKVFRIGGAQAIGALAFGTKQINKVDVISGPGNIYVTTAKKLIYGFTGIDSLAGPSEILIIADRTANSSQIASDLLAQAEHDPLASSILLTTSNDQAQEVFDEVFKIIENHPRKEICIQSIKNWGLIAICENLESCVELSNEFAPEHLEIITIDPKTTLKSIENAGAIFLGKWTPEAVGDYLAGPNHTLPTCGNARFSGSLGVETFMKNSSIIEFNEKSLKINSVDIINLANSEGLHSHANSVKIRFED.

NAD(+) contacts are provided by Tyr-127, Gln-189, and Asn-212. The substrate site is built by Ser-235, Gln-257, and His-260. Zn(2+) is bound by residues Gln-257 and His-260. Residues Glu-325 and His-326 each act as proton acceptor in the active site. 4 residues coordinate substrate: His-326, Asp-359, Glu-413, and His-418. Asp-359 contributes to the Zn(2+) binding site. His-418 provides a ligand contact to Zn(2+).

The protein belongs to the histidinol dehydrogenase family. Zn(2+) serves as cofactor.

It carries out the reaction L-histidinol + 2 NAD(+) + H2O = L-histidine + 2 NADH + 3 H(+). The protein operates within amino-acid biosynthesis; L-histidine biosynthesis; L-histidine from 5-phospho-alpha-D-ribose 1-diphosphate: step 9/9. Its function is as follows. Catalyzes the sequential NAD-dependent oxidations of L-histidinol to L-histidinaldehyde and then to L-histidine. This Prochlorococcus marinus subsp. pastoris (strain CCMP1986 / NIES-2087 / MED4) protein is Histidinol dehydrogenase.